Reading from the N-terminus, the 474-residue chain is Bifunctional protein HldE (474 aa).

Positions 1–317 (MKLSMPRFDR…RRAVQREQGS (317 aa)) are ribokinase. 194–197 (NLAE) is a binding site for ATP. The active site involves D263. Residues 343–474 (FTNGCFDILH…GIVEKIRRQP (132 aa)) are cytidylyltransferase.

This sequence in the N-terminal section; belongs to the carbohydrate kinase PfkB family. It in the C-terminal section; belongs to the cytidylyltransferase family. As to quaternary structure, homodimer.

The enzyme catalyses D-glycero-beta-D-manno-heptose 7-phosphate + ATP = D-glycero-beta-D-manno-heptose 1,7-bisphosphate + ADP + H(+). It carries out the reaction D-glycero-beta-D-manno-heptose 1-phosphate + ATP + H(+) = ADP-D-glycero-beta-D-manno-heptose + diphosphate. Its pathway is nucleotide-sugar biosynthesis; ADP-L-glycero-beta-D-manno-heptose biosynthesis; ADP-L-glycero-beta-D-manno-heptose from D-glycero-beta-D-manno-heptose 7-phosphate: step 1/4. The protein operates within nucleotide-sugar biosynthesis; ADP-L-glycero-beta-D-manno-heptose biosynthesis; ADP-L-glycero-beta-D-manno-heptose from D-glycero-beta-D-manno-heptose 7-phosphate: step 3/4. Functionally, catalyzes the phosphorylation of D-glycero-D-manno-heptose 7-phosphate at the C-1 position to selectively form D-glycero-beta-D-manno-heptose-1,7-bisphosphate. In terms of biological role, catalyzes the ADP transfer from ATP to D-glycero-beta-D-manno-heptose 1-phosphate, yielding ADP-D-glycero-beta-D-manno-heptose. This is Bifunctional protein HldE from Azotobacter vinelandii (strain DJ / ATCC BAA-1303).